Here is a 138-residue protein sequence, read N- to C-terminus: Transcription factor Atoh7-a (138 aa).

In terms of domain architecture, bHLH spans Lys-33–Leu-85.

Its subcellular location is the nucleus. The protein resides in the perikaryon. It is found in the cell projection. The protein localises to the axon. Transcription factor that binds to DNA at the consensus sequence 5'-CAG[GC]TG-3'. Positively regulates the determination of retinal ganglion cell fate and formation of the optic nerve and retino-hypothalamic tract. Required for retinal circadian rhythm photoentrainment. Plays a role in brainstem auditory signaling and binaural processing. Regulates the differentiation of olfactory receptor neurons. During retinal neurogenesis, activates the transcription of several genes such as brn3d, coe3, cbfa2t2, glis2, elrC and xgadd45-gamma. In Xenopus laevis (African clawed frog), this protein is Transcription factor Atoh7-a.